A 493-amino-acid polypeptide reads, in one-letter code: Arginine decarboxylase (493 aa).

Lys229 is modified (N6-(pyridoxal phosphate)lysine).

The protein belongs to the Orn/Lys/Arg decarboxylase class-I family. Pyridoxal 5'-phosphate serves as cofactor.

It is found in the cytoplasm. The catalysed reaction is L-arginine + H(+) = agmatine + CO2. It participates in amine and polyamine biosynthesis; agmatine biosynthesis; agmatine from L-arginine: step 1/1. Its function is as follows. Catalyzes the formation of agmatine from arginine. The sequence is that of Arginine decarboxylase (speA) from Bacillus anthracis.